We begin with the raw amino-acid sequence, 154 residues long: Large ribosomal subunit protein uL13 (154 aa).

It belongs to the universal ribosomal protein uL13 family. Part of the 50S ribosomal subunit.

Functionally, this protein is one of the early assembly proteins of the 50S ribosomal subunit, although it is not seen to bind rRNA by itself. It is important during the early stages of 50S assembly. The chain is Large ribosomal subunit protein uL13 from Brucella melitensis biotype 2 (strain ATCC 23457).